The sequence spans 146 residues: Snaclec stejaggregin-B subunit beta-1 (146 aa).

A signal peptide spans 1-23; sequence MGRFIFVSFGLLVVFLSLSGTGA. Disulfide bonds link cysteine 25/cysteine 36, cysteine 53/cysteine 142, and cysteine 119/cysteine 134. The region spanning 32-143 is the C-type lectin domain; that stretch reads YDLYCYRVFQ…CSQTYPFVCK (112 aa).

This sequence belongs to the snaclec family. In terms of assembly, heteromultimer; disulfide-linked. Expressed by the venom gland.

It localises to the secreted. In terms of biological role, interferes with one step of hemostasis (modulation of platelet aggregation, or coagulation cascade, for example). The sequence is that of Snaclec stejaggregin-B subunit beta-1 from Trimeresurus stejnegeri (Chinese green tree viper).